The following is a 61-amino-acid chain: Small ribosomal subunit protein uS14 (61 aa).

Cys-24, Cys-27, Cys-40, and Cys-43 together coordinate Zn(2+).

This sequence belongs to the universal ribosomal protein uS14 family. Zinc-binding uS14 subfamily. As to quaternary structure, part of the 30S ribosomal subunit. Contacts proteins S3 and S10. Zn(2+) is required as a cofactor.

Functionally, binds 16S rRNA, required for the assembly of 30S particles and may also be responsible for determining the conformation of the 16S rRNA at the A site. This Oleidesulfovibrio alaskensis (strain ATCC BAA-1058 / DSM 17464 / G20) (Desulfovibrio alaskensis) protein is Small ribosomal subunit protein uS14.